The sequence spans 585 residues: Arginine--tRNA ligase (585 aa).

Residues 131 to 141 (ANPTGPMHVGH) carry the 'HIGH' region motif.

It belongs to the class-I aminoacyl-tRNA synthetase family. As to quaternary structure, monomer.

The protein resides in the cytoplasm. The catalysed reaction is tRNA(Arg) + L-arginine + ATP = L-arginyl-tRNA(Arg) + AMP + diphosphate. In Sinorhizobium medicae (strain WSM419) (Ensifer medicae), this protein is Arginine--tRNA ligase.